Here is a 470-residue protein sequence, read N- to C-terminus: Glutamate--tRNA ligase (470 aa).

A 'HIGH' region motif is present at residues 9–19 (PSPTGYLHVGG). The 'KMSKS' region signature appears at 236 to 240 (RLSKR). Lys-239 is a binding site for ATP.

It belongs to the class-I aminoacyl-tRNA synthetase family. Glutamate--tRNA ligase type 1 subfamily. As to quaternary structure, monomer.

The protein localises to the cytoplasm. It catalyses the reaction tRNA(Glu) + L-glutamate + ATP = L-glutamyl-tRNA(Glu) + AMP + diphosphate. Functionally, catalyzes the attachment of glutamate to tRNA(Glu) in a two-step reaction: glutamate is first activated by ATP to form Glu-AMP and then transferred to the acceptor end of tRNA(Glu). This Colwellia psychrerythraea (strain 34H / ATCC BAA-681) (Vibrio psychroerythus) protein is Glutamate--tRNA ligase.